Here is a 420-residue protein sequence, read N- to C-terminus: Gamma-glutamyl phosphate reductase (420 aa).

The protein belongs to the gamma-glutamyl phosphate reductase family.

The protein resides in the cytoplasm. The catalysed reaction is L-glutamate 5-semialdehyde + phosphate + NADP(+) = L-glutamyl 5-phosphate + NADPH + H(+). Its pathway is amino-acid biosynthesis; L-proline biosynthesis; L-glutamate 5-semialdehyde from L-glutamate: step 2/2. Functionally, catalyzes the NADPH-dependent reduction of L-glutamate 5-phosphate into L-glutamate 5-semialdehyde and phosphate. The product spontaneously undergoes cyclization to form 1-pyrroline-5-carboxylate. The chain is Gamma-glutamyl phosphate reductase from Laribacter hongkongensis (strain HLHK9).